The chain runs to 276 residues: MFTIGAHLSISKGFENLGLEALSIDANTAQFFPRSPRGGKAKPLNQADVDGLQELMDNTTMDVILAHAPYIINLASKSEKTRNNAYEIFEDDLKRLDNLPNNMYNFHPGSHVQQGVEKGIELISDSLNKLIREDMKTTILLETMAGKGTEIGRTFEELESIIEKIDMDEKVGVCIDTCHIYDGGYDIVNDLDGVIDEFDSIIGLDRLKAIHLNDSKYGLNSHKDRHEKIGMGKIGIDAITEIINHKKLRDLPFYLETPNDVEGYKEEIDLLRGLYK.

H67, H107, E142, D176, H179, H211, D224, H226, and E256 together coordinate Zn(2+).

This sequence belongs to the AP endonuclease 2 family. It depends on Zn(2+) as a cofactor.

It catalyses the reaction Endonucleolytic cleavage to 5'-phosphooligonucleotide end-products.. Endonuclease IV plays a role in DNA repair. It cleaves phosphodiester bonds at apurinic or apyrimidinic (AP) sites, generating a 3'-hydroxyl group and a 5'-terminal sugar phosphate. This is Probable endonuclease 4 from Methanosphaera stadtmanae (strain ATCC 43021 / DSM 3091 / JCM 11832 / MCB-3).